Consider the following 840-residue polypeptide: MAGPGSTGGQIGAAALAGGARSKVAPSVDFDHSCSDSVEYLTLNFGPFETVHRWRRLPPCDEFVGARRSKHTVVAYKDAIYVFGGDNGKTMLNDLLRFDVKDCSWCRAFTTGTPPAPRYHHSAVVYGSSMFVFGGYTGDIYSNSNLKNKNDLFEYKFATGQWTEWKIEGRLPVARSAHGATVYSDKLWIFAGYDGNARLNDMWTIGLQDRELTCWEEVAQSGEIPPSCCNFPVAVCRDKMFVFSGQSGAKITNNLFQFEFKDKTWTRIPTEHLLRGSPPPPQRRYGHTMVAFDRHLYVFGGAADNTLPNELHCYDVDFQTWEVVQPSSDSEVGGAEVPERACASEEVPTLTYEERVGFKKSRDVFGLDFGTTSAKQPTQPASELPSGRLFHAAAVISDAMYIFGGTVDNNIRSGEMYRFQFSCYPKCTLHEDYGRLWESRQFCDVEFVLGEKEECVQGHVAIVTARSRWLRRKITQARERLAQKLEQEAAPVPREAPGVAAGGARPPLLHVAIREAEARPFEVLMQFLYTDKIKYPRKGHVEDVLLIMDVYKLALSFQLCRLEQLCRQYIEASVDLQNVLVVCESAARLQLSQLKEHCLNFVVKESHFNQVIMMKEFERLSSPLIVEIVRRKQQPPPRTPLDQPVDIGTSLIQDMKAYLEGAGAEFCDITLLLDGHPRPAHKAILAARSSYFEAMFRSFMPEDGQVNISIGEMVPSRQAFESMLRYIYYGEVNMPPEDSLYLFAAPYYYGFYNNRLQAYCKQNLEMNVTVQNVLQILEAADKTQALDMKRHCLHIIVHQFTKVSKLPTLRSLSQQLLLDIIDSLASHISDKQCAELGADI.

An N-acetylalanine modification is found at Ala2. Kelch repeat units follow at residues 79 to 128 (AIYV…VYGS), 130 to 185 (MFVF…VYSD), 187 to 238 (LWIF…VCRD), 239 to 285 (KMFV…QRRY), 295 to 341 (HLYV…PERA), and 399 to 450 (AMYI…FVLG). BTB domains follow at residues 443–537 (CDVE…KYPR) and 667–736 (CDIT…NMPP).

The protein belongs to the LZTR1 family. Homodimer. Component of the BCR(LZTR1) E3 ubiquitin ligase complex, at least composed of CUL3, LZTR1 and RBX1. Interacts with Ras (K-Ras/KRAS, N-Ras/NRAS and H-Ras/HRAS). Interacts with RAF1. Interacts with SHOC2. Interacts with PPP1CB. In terms of processing, phosphorylated on tyrosine upon induction of apoptosis, leading to its degradation by the proteasome.

The protein resides in the endomembrane system. The protein localises to the recycling endosome. It localises to the golgi apparatus. It functions in the pathway protein modification; protein ubiquitination. Its function is as follows. Substrate-specific adapter of a BCR (BTB-CUL3-RBX1) E3 ubiquitin-protein ligase complex that mediates ubiquitination of Ras (K-Ras/KRAS, N-Ras/NRAS and H-Ras/HRAS). Is a negative regulator of RAS-MAPK signaling that acts by controlling Ras levels and decreasing Ras association with membranes. In Homo sapiens (Human), this protein is Leucine-zipper-like transcriptional regulator 1.